We begin with the raw amino-acid sequence, 360 residues long: 45 kDa calcium-binding protein (360 aa).

A signal peptide spans 1 to 29 (MVSKQAFLFSLGSLYLSLLFIFLLMDVYA). The N-linked (GlcNAc...) asparagine glycan is linked to Asn33. EF-hand domains are found at residues 96–131 (RNRR…KTEE), 135–170 (EAVN…SKGF), 231–266 (MLKF…TVEN), 276–311 (WVRD…MNEY), and 312–347 (NALN…FTGS). Ca(2+) contacts are provided by Asp109, Asn111, Asp113, Gln115, Glu120, Asp148, Asp150, Asp152, His154, Glu159, Asp244, Asp246, Asp248, Lys250, Glu255, Asp289, Asn291, Asp293, Glu300, Asp325, Asn327, Asp329, and Glu336.

This sequence belongs to the CREC family.

It localises to the golgi apparatus lumen. Functionally, may regulate calcium-dependent activities in the endoplasmic reticulum lumen or post-ER compartment. The protein is 45 kDa calcium-binding protein (sdf4) of Xenopus laevis (African clawed frog).